We begin with the raw amino-acid sequence, 162 residues long: Cyanate hydratase (162 aa).

Catalysis depends on residues arginine 103, glutamate 106, and serine 129.

It belongs to the cyanase family.

It catalyses the reaction cyanate + hydrogencarbonate + 3 H(+) = NH4(+) + 2 CO2. In terms of biological role, catalyzes the reaction of cyanate with bicarbonate to produce ammonia and carbon dioxide. In Pyrenophora tritici-repentis (strain Pt-1C-BFP) (Wheat tan spot fungus), this protein is Cyanate hydratase.